A 317-amino-acid polypeptide reads, in one-letter code: Transaldolase (317 aa).

The active-site Schiff-base intermediate with substrate is Lys-132.

Belongs to the transaldolase family. Type 1 subfamily. As to quaternary structure, homodimer.

The protein resides in the cytoplasm. It carries out the reaction D-sedoheptulose 7-phosphate + D-glyceraldehyde 3-phosphate = D-erythrose 4-phosphate + beta-D-fructose 6-phosphate. The protein operates within carbohydrate degradation; pentose phosphate pathway; D-glyceraldehyde 3-phosphate and beta-D-fructose 6-phosphate from D-ribose 5-phosphate and D-xylulose 5-phosphate (non-oxidative stage): step 2/3. Transaldolase is important for the balance of metabolites in the pentose-phosphate pathway. This is Transaldolase from Yersinia pseudotuberculosis serotype O:1b (strain IP 31758).